Here is a 288-residue protein sequence, read N- to C-terminus: Phosphatidate cytidylyltransferase (288 aa).

7 helical membrane passes run 10–30, 52–72, 89–109, 118–138, 152–172, 192–212, and 223–243; these read IVLI…YFAL, PLIR…WLYT, LLLI…ISYP, NPLL…AGVL, GLFL…GAYF, WEGV…FIHF, and ITGF…GDLT.

It belongs to the CDS family.

Its subcellular location is the cell inner membrane. It carries out the reaction a 1,2-diacyl-sn-glycero-3-phosphate + CTP + H(+) = a CDP-1,2-diacyl-sn-glycerol + diphosphate. It participates in phospholipid metabolism; CDP-diacylglycerol biosynthesis; CDP-diacylglycerol from sn-glycerol 3-phosphate: step 3/3. The sequence is that of Phosphatidate cytidylyltransferase (cdsA) from Haemophilus influenzae (strain ATCC 51907 / DSM 11121 / KW20 / Rd).